Here is a 544-residue protein sequence, read N- to C-terminus: Inosine-5'-monophosphate dehydrogenase (544 aa).

CBS domains lie at 132 to 192 (FITD…PIKS) and 194 to 250 (MTTE…PYAS). NAD(+) is bound by residues 288–290 (DSS) and 338–340 (GMG). 2 residues coordinate K(+): Gly340 and Gly342. IMP is bound at residue Ser343. Cys345 serves as a coordination point for K(+). The Thioimidate intermediate role is filled by Cys345. IMP-binding positions include 378 to 380 (DGG), 401 to 402 (GG), and 425 to 429 (YRGMG). The active-site Proton acceptor is Arg458. Residue Gln470 participates in IMP binding. Glu529, Gly530, and Gly531 together coordinate K(+).

This sequence belongs to the IMPDH/GMPR family. In terms of assembly, homotetramer. K(+) serves as cofactor.

It is found in the cytoplasm. The enzyme catalyses IMP + NAD(+) + H2O = XMP + NADH + H(+). The protein operates within purine metabolism; XMP biosynthesis via de novo pathway; XMP from IMP: step 1/1. Its activity is regulated as follows. Mycophenolic acid (MPA) is a non-competitive inhibitor that prevents formation of the closed enzyme conformation by binding to the same site as the amobile flap. In contrast, mizoribine monophosphate (MZP) is a competitive inhibitor that induces the closed conformation. MPA is a potent inhibitor of mammalian IMPDHs but a poor inhibitor of the bacterial enzymes. MZP is a more potent inhibitor of bacterial IMPDH. Catalyzes the conversion of inosine 5'-phosphate (IMP) to xanthosine 5'-phosphate (XMP), the first committed and rate-limiting step in the de novo synthesis of guanine nucleotides, and therefore plays an important role in the regulation of cell growth. This is Inosine-5'-monophosphate dehydrogenase from Cryptococcus neoformans var. neoformans serotype D (strain JEC21 / ATCC MYA-565) (Filobasidiella neoformans).